A 516-amino-acid polypeptide reads, in one-letter code: 2-isopropylmalate synthase (516 aa).

The region spanning 10-271 (IRIFDTTLRD…TTGIDTRELA (262 aa)) is the Pyruvate carboxyltransferase domain. Mn(2+) is bound by residues D19, H205, H207, and N241. Residues 396–516 (ELVSFRVEAG…REKASNRETP (121 aa)) are regulatory domain.

It belongs to the alpha-IPM synthase/homocitrate synthase family. LeuA type 1 subfamily. As to quaternary structure, homodimer. It depends on Mn(2+) as a cofactor.

The protein resides in the cytoplasm. It carries out the reaction 3-methyl-2-oxobutanoate + acetyl-CoA + H2O = (2S)-2-isopropylmalate + CoA + H(+). It functions in the pathway amino-acid biosynthesis; L-leucine biosynthesis; L-leucine from 3-methyl-2-oxobutanoate: step 1/4. Functionally, catalyzes the condensation of the acetyl group of acetyl-CoA with 3-methyl-2-oxobutanoate (2-ketoisovalerate) to form 3-carboxy-3-hydroxy-4-methylpentanoate (2-isopropylmalate). The chain is 2-isopropylmalate synthase from Acidimicrobium ferrooxidans (strain DSM 10331 / JCM 15462 / NBRC 103882 / ICP).